Here is a 224-residue protein sequence, read N- to C-terminus: Metalloproteinase inhibitor 4 (224 aa).

The N-terminal stretch at 1 to 29 (MPWSPLAALSWALVLRLLALLWPPGRGEA) is a signal peptide. Cys-30 is a binding site for Zn(2+). Involved in metalloproteinase-binding stretches follow at residues 30–33 (CSCA) and 99–100 (SS). 6 disulfides stabilise this stretch: Cys-30/Cys-102, Cys-32/Cys-131, Cys-42/Cys-156, Cys-158/Cys-205, Cys-163/Cys-168, and Cys-176/Cys-197. The NTR domain maps to 30–156 (CSCAPAHPQQ…SLNHHYHQNC (127 aa)).

It belongs to the protease inhibitor I35 (TIMP) family. Expressed in retina, smooth muscle, skin, pancreas, skeletal muscle, heart, brain, lung, kidney and testis. Not found in cartilage, spleen and liver.

It is found in the secreted. Functionally, complexes with metalloproteinases (such as collagenases) and irreversibly inactivates them by binding to their catalytic zinc cofactor. This chain is Metalloproteinase inhibitor 4 (Timp4), found in Rattus norvegicus (Rat).